The following is a 220-amino-acid chain: Peritrophin-55 (220 aa).

Positions 1–19 (MKSVFVCTLVLALAHHAFA) are cleaved as a signal peptide. A glycan (N-linked (GlcNAc...) asparagine) is linked at asparagine 29. The region spanning 33-95 (ITPCLGNDII…NFIPAPTCEY (63 aa)) is the Chitin-binding type-2 domain. A disulfide bridge links cysteine 68 with cysteine 84. Residues 116-165 (TTLKTTPSKTTPIVTTAPPSTPVPSTIVTNKPDPTTPKTTKPPKVTTTVN) are compositionally biased toward low complexity. A disordered region spans residues 116–220 (TTLKTTPSKT…TPPSIVQLQN (105 aa)). Residues 197–210 (PTPPGMPPTPPSFG) show a composition bias toward pro residues.

Glycosylated. Larval peritrophic membrane.

Functionally, may bind oligosaccharide structures. The sequence is that of Peritrophin-55 from Lucilia cuprina (Green bottle fly).